The chain runs to 386 residues: Chorismate synthase (386 aa).

The interval 32–60 (LPLSEDDVQRELDRRRPGQSGVSTPRSER) is disordered. Positions 38 to 47 (DVQRELDRRR) are enriched in basic and acidic residues. Arginine 46 is a binding site for NADP(+). FMN contacts are provided by residues 123–125 (RAS), glycine 290, 305–309 (KPTPS), and arginine 332.

It belongs to the chorismate synthase family. It depends on FMNH2 as a cofactor.

It carries out the reaction 5-O-(1-carboxyvinyl)-3-phosphoshikimate = chorismate + phosphate. Its pathway is metabolic intermediate biosynthesis; chorismate biosynthesis; chorismate from D-erythrose 4-phosphate and phosphoenolpyruvate: step 7/7. Catalyzes the anti-1,4-elimination of the C-3 phosphate and the C-6 proR hydrogen from 5-enolpyruvylshikimate-3-phosphate (EPSP) to yield chorismate, which is the branch point compound that serves as the starting substrate for the three terminal pathways of aromatic amino acid biosynthesis. This reaction introduces a second double bond into the aromatic ring system. In Methanopyrus kandleri (strain AV19 / DSM 6324 / JCM 9639 / NBRC 100938), this protein is Chorismate synthase.